The primary structure comprises 463 residues: L-seryl-tRNA(Sec) selenium transferase (463 aa).

An N6-(pyridoxal phosphate)lysine modification is found at K295.

The protein belongs to the SelA family. In terms of assembly, homodecamer; pentamer of dimers. Binds only one seryl-tRNA(Sec) per dimer. Pyridoxal 5'-phosphate serves as cofactor.

It localises to the cytoplasm. The enzyme catalyses L-seryl-tRNA(Sec) + selenophosphate + H(+) = L-selenocysteinyl-tRNA(Sec) + phosphate. It participates in aminoacyl-tRNA biosynthesis; selenocysteinyl-tRNA(Sec) biosynthesis; selenocysteinyl-tRNA(Sec) from L-seryl-tRNA(Sec) (bacterial route): step 1/1. Converts seryl-tRNA(Sec) to selenocysteinyl-tRNA(Sec) required for selenoprotein biosynthesis. This chain is L-seryl-tRNA(Sec) selenium transferase, found in Shigella dysenteriae serotype 1 (strain Sd197).